The primary structure comprises 2357 residues: Protein transport protein Sec16A (2357 aa).

Disordered stretches follow at residues 1-225 (MQPP…SYQH), 240-347 (QAAS…AHHP), 394-463 (SFSS…GTGT), 504-562 (YGPL…ARPQ), 579-630 (DTSG…TSAN), 666-689 (KRRA…DNME), 714-739 (TAGT…GPVK), 778-820 (SEVV…PPKV), 917-1008 (VTGA…QEEA), 1023-1055 (PVRM…LHNQ), and 1076-1151 (QPEL…AAVR). Composition is skewed to polar residues over residues 57–75 (NRQT…SSLP) and 94–104 (TPTNAGDSSTG). Low complexity predominate over residues 208–221 (MPGQWGPAQGGPQP). Positions 281–290 (VHQQSKNHPL) are enriched in polar residues. Phosphoserine is present on serine 311. Polar residues predominate over residues 333–342 (PFTQGNSPEN). Low complexity predominate over residues 540-561 (PDSVSSSYSSHSHRSPPGSARP). 5 positions are modified to phosphoserine: serine 581, serine 591, serine 609, serine 611, and serine 614. A compositionally biased stretch (polar residues) spans 581-590 (SGSFFKQIDS). Threonine 615 is modified (phosphothreonine). Phosphoserine is present on serine 617. 3 stretches are compositionally biased toward polar residues: residues 921 to 959 (SLPS…QTPQ), 972 to 997 (FVSS…PNSN), and 1029 to 1041 (PSPS…QQPL). Residues 1037-1905 (SQQPLPNHPR…QHVERQIQEG (869 aa)) form a required for localization to endoplasmic reticulum exit sites region. Serine 1087 is modified (phosphoserine). The interval 1118 to 1415 (ASPASVNTGQ…EAPHAPGSFH (298 aa)) is interaction with MIA3. The tract at residues 1119–1420 (SPASVNTGQL…PGSFHGDYAY (302 aa)) is required for endoplasmic reticulum localization. Over residues 1134–1150 (QASSASVTSTNSSQAAV) the composition is skewed to low complexity. Serine 1223 carries the phosphoserine modification. Residues 1226–1253 (AENHRYSEPERPSSRASHYSDQLAPRQG) form a disordered region. Residues 1227–1238 (ENHRYSEPERPS) show a composition bias toward basic and acidic residues. The residue at position 1245 (serine 1245) is a Phosphoserine. Phosphothreonine is present on threonine 1340. 9 positions are modified to phosphoserine: serine 1342, serine 1362, serine 1365, serine 1371, serine 1374, serine 1377, serine 1384, serine 1588, and serine 1616. The interval 1344-1395 (DDDAEIHRDPYGEEADRRSIHSEHSARSLRSTHSLPSRRSSLSSHSHQSQIY) is disordered. The span at 1348–1369 (EIHRDPYGEEADRRSIHSEHSA) shows a compositional bias: basic and acidic residues. Positions 1371–1392 (SLRSTHSLPSRRSSLSSHSHQS) are enriched in low complexity. Residues 1449–1905 (QVPSRPTSPE…QHVERQIQEG (457 aa)) form a central conserved domain (CCD); mediates interaction with RNF183, LRRK2 and SEC13 region. The tract at residues 1907 to 1943 (VLWSQDGTEPQQCRITSGSEVEQSDGPGLNQQAGPQA) is disordered. Residues 1908-1927 (LWSQDGTEPQQCRITSGSEV) are compositionally biased toward polar residues. Threonine 1922 is modified (phosphothreonine). Residues serine 1951, serine 2043, serine 2063, serine 2077, and serine 2094 each carry the phosphoserine modification. 3 disordered regions span residues 1993–2141 (ELSP…RTEA), 2156–2198 (KKNQ…PTAS), and 2240–2357 (PLPI…AALN). Over residues 2092–2105 (GSSSLTRAPSLTSD) the composition is skewed to polar residues. Basic and acidic residues predominate over residues 2106-2126 (SEGKKPAQAVKKEPKEPKKTE). Positions 2126-2357 (ESWFSRWLPG…IGQRKYAALN (232 aa)) are required for interaction with SEC23A. Serine 2291 is subject to Phosphoserine. Over residues 2332–2343 (QLVQASVTSGNS) the composition is skewed to polar residues.

It belongs to the SEC16 family. In terms of assembly, SEC16A and SEC16B are each present in multiple copies in a heteromeric complex. Interacts with SEC23A. Interacts with RNF183, RNF152, MIA3 and SEC13. Interacts with GORASP2 in response to ER stress. Interacts with LRRK2 (via ROC domain). Interacts with RAB10.

It is found in the endoplasmic reticulum membrane. The protein resides in the golgi apparatus membrane. It localises to the cytoplasm. The protein localises to the perinuclear region. Its subcellular location is the cytosol. It is found in the microsome membrane. Its function is as follows. Acts as a molecular scaffold that plays a key role in the organization of the endoplasmic reticulum exit sites (ERES), also known as transitional endoplasmic reticulum (tER). SAR1A-GTP-dependent assembly of SEC16A on the ER membrane forms an organized scaffold defining an ERES. Required for secretory cargo traffic from the endoplasmic reticulum to the Golgi apparatus. Mediates the recruitment of MIA3/TANGO to ERES. Regulates both conventional (ER/Golgi-dependent) and GORASP2-mediated unconventional (ER/Golgi-independent) trafficking of CFTR to cell membrane. Acts as a RAB10 effector in the regulation of insulin-induced SLC2A4/GLUT4 glucose transporter-enriched vesicles delivery to the plasma membrane in adipocytes. This is Protein transport protein Sec16A (Sec16a) from Mus musculus (Mouse).